Here is a 250-residue protein sequence, read N- to C-terminus: DNA repair protein RecO (250 aa).

The protein belongs to the RecO family.

Its function is as follows. Involved in DNA repair and RecF pathway recombination. The sequence is that of DNA repair protein RecO from Staphylococcus aureus (strain bovine RF122 / ET3-1).